The primary structure comprises 236 residues: Peptidase E (236 aa).

Catalysis depends on charge relay system residues Ser122, Asp137, and His159.

The protein belongs to the peptidase S51 family.

The protein localises to the cytoplasm. It carries out the reaction Dipeptidase E catalyzes the hydrolysis of dipeptides Asp-|-Xaa. It does not act on peptides with N-terminal Glu, Asn or Gln, nor does it cleave isoaspartyl peptides.. Functionally, hydrolyzes dipeptides containing N-terminal aspartate residues. May play a role in allowing the cell to use peptide aspartate to spare carbon otherwise required for the synthesis of the aspartate family of amino acids. The sequence is that of Peptidase E from Shewanella oneidensis (strain ATCC 700550 / JCM 31522 / CIP 106686 / LMG 19005 / NCIMB 14063 / MR-1).